A 298-amino-acid chain; its full sequence is Bifunctional protein FolD (298 aa).

NADP(+) contacts are provided by residues 165–167 (GRS), serine 190, and isoleucine 231.

It belongs to the tetrahydrofolate dehydrogenase/cyclohydrolase family. Homodimer.

It catalyses the reaction (6R)-5,10-methylene-5,6,7,8-tetrahydrofolate + NADP(+) = (6R)-5,10-methenyltetrahydrofolate + NADPH. It carries out the reaction (6R)-5,10-methenyltetrahydrofolate + H2O = (6R)-10-formyltetrahydrofolate + H(+). Its pathway is one-carbon metabolism; tetrahydrofolate interconversion. Catalyzes the oxidation of 5,10-methylenetetrahydrofolate to 5,10-methenyltetrahydrofolate and then the hydrolysis of 5,10-methenyltetrahydrofolate to 10-formyltetrahydrofolate. This chain is Bifunctional protein FolD, found in Prochlorococcus marinus (strain MIT 9515).